The following is a 197-amino-acid chain: Holliday junction branch migration complex subunit RuvA (197 aa).

A domain I region spans residues 1–65 (MISQVRGTIM…EDAWHLYGFA (65 aa)). Positions 66 to 140 (HAYERAVFQK…DKIDAVGPAP (75 aa)) are domain II. A flexible linker region spans residues 140–144 (PATGT). Positions 145 to 197 (APSPLGDDAVRALIALGYNQTEADRAVRAVVESGAPKDVSSLVRGALSRLTAK) are domain III.

The protein belongs to the RuvA family. Homotetramer. Forms an RuvA(8)-RuvB(12)-Holliday junction (HJ) complex. HJ DNA is sandwiched between 2 RuvA tetramers; dsDNA enters through RuvA and exits via RuvB. An RuvB hexamer assembles on each DNA strand where it exits the tetramer. Each RuvB hexamer is contacted by two RuvA subunits (via domain III) on 2 adjacent RuvB subunits; this complex drives branch migration. In the full resolvosome a probable DNA-RuvA(4)-RuvB(12)-RuvC(2) complex forms which resolves the HJ.

The protein resides in the cytoplasm. Its function is as follows. The RuvA-RuvB-RuvC complex processes Holliday junction (HJ) DNA during genetic recombination and DNA repair, while the RuvA-RuvB complex plays an important role in the rescue of blocked DNA replication forks via replication fork reversal (RFR). RuvA specifically binds to HJ cruciform DNA, conferring on it an open structure. The RuvB hexamer acts as an ATP-dependent pump, pulling dsDNA into and through the RuvAB complex. HJ branch migration allows RuvC to scan DNA until it finds its consensus sequence, where it cleaves and resolves the cruciform DNA. In Gemmatimonas aurantiaca (strain DSM 14586 / JCM 11422 / NBRC 100505 / T-27), this protein is Holliday junction branch migration complex subunit RuvA.